The following is a 280-amino-acid chain: Ribulose-phosphate 3-epimerase, chloroplastic (280 aa).

The N-terminal 45 residues, serine 1–alanine 45, are a transit peptide targeting the chloroplast. A substrate-binding site is contributed by serine 62. A divalent metal cation-binding residues include histidine 87, aspartate 89, and histidine 120. Aspartate 89 serves as the catalytic Proton acceptor. Residues histidine 120, glycine 198–glycine 201, aspartate 231–glycine 233, and glycine 253–serine 254 contribute to the substrate site. Aspartate 231 lines the a divalent metal cation pocket. Residue aspartate 231 is the Proton donor of the active site.

This sequence belongs to the ribulose-phosphate 3-epimerase family. As to quaternary structure, homohexamer. The cofactor is Co(2+). It depends on Fe(2+) as a cofactor. Mn(2+) serves as cofactor. Requires Zn(2+) as cofactor. In terms of tissue distribution, highest level of expression in leaves, whereas it is low in roots, tubers, and stems.

It localises to the plastid. The protein localises to the chloroplast thylakoid membrane. It carries out the reaction D-ribulose 5-phosphate = D-xylulose 5-phosphate. It functions in the pathway carbohydrate biosynthesis; Calvin cycle. Catalyzes the reversible epimerization of D-ribulose 5-phosphate to D-xylulose 5-phosphate. This is Ribulose-phosphate 3-epimerase, chloroplastic from Solanum tuberosum (Potato).